Here is a 490-residue protein sequence, read N- to C-terminus: ATP synthase subunit beta, chloroplastic (490 aa).

170-177 (GGAGVGKT) contacts ATP.

The protein belongs to the ATPase alpha/beta chains family. As to quaternary structure, F-type ATPases have 2 components, CF(1) - the catalytic core - and CF(0) - the membrane proton channel. CF(1) has five subunits: alpha(3), beta(3), gamma(1), delta(1), epsilon(1). CF(0) has four main subunits: a(1), b(1), b'(1) and c(9-12).

It localises to the plastid. It is found in the chloroplast thylakoid membrane. It catalyses the reaction ATP + H2O + 4 H(+)(in) = ADP + phosphate + 5 H(+)(out). Its function is as follows. Produces ATP from ADP in the presence of a proton gradient across the membrane. The catalytic sites are hosted primarily by the beta subunits. The chain is ATP synthase subunit beta, chloroplastic from Calystegia sepium (Hedge bindweed).